The sequence spans 297 residues: Elongation factor Ts (297 aa).

Residues 82–85 (TDFV) are involved in Mg(2+) ion dislocation from EF-Tu.

This sequence belongs to the EF-Ts family.

The protein resides in the cytoplasm. Associates with the EF-Tu.GDP complex and induces the exchange of GDP to GTP. It remains bound to the aminoacyl-tRNA.EF-Tu.GTP complex up to the GTP hydrolysis stage on the ribosome. This is Elongation factor Ts from Azoarcus sp. (strain BH72).